Here is a 198-residue protein sequence, read N- to C-terminus: Host transcription reprogramming factor 1 (198 aa).

The N-terminal stretch at 1-19 (MQLSNFLSIWALVAMGATA) is a signal peptide. Disordered stretches follow at residues 21-59 (PMPSGSAPGNPFADGEAYGARPSQGLTPVPKVHDGSYHS) and 71-198 (ERLA…PVQL). The C2H2-type zinc-finger motif lies at 58–81 (HSCETCAAPFRTEERLAAHRQADH). Composition is skewed to basic and acidic residues over residues 71 to 80 (ERLAAHRQAD), 104 to 128 (TSERERLDRLASRVGEDYVEKRSQE), and 167 to 177 (KLDKPTRKEQY).

The protein resides in the secreted. It localises to the host nucleus. Functionally, secreted effector that translocates into the nuclei of host cells to reprogram the expression of immunity-associated genes by binding to effector binding elements (EBEs) in rice. Binds the 5'-CAATCTTC-3' EBE of promoters from targeted rice genes and probably recruits a yet to be determined host repressor. Causes ambivalent immunity with increased susceptibility to the hemibiotrophic pathogens Magnaporthe oryzae and Xanthomonas oryzae pv. oryzae, but enhances resistance to Cochliobolus miyabeanus, a necrotrophic pathogen. The polypeptide is Host transcription reprogramming factor 1 (Pyricularia oryzae (strain 70-15 / ATCC MYA-4617 / FGSC 8958) (Rice blast fungus)).